We begin with the raw amino-acid sequence, 886 residues long: Protein O-mannosyltransferase 1 (886 aa).

Composition is skewed to polar residues over residues 1 to 10 and 18 to 34; these read MSATYTNTIT and VRQQ…LSGE. Disordered stretches follow at residues 1–37 and 88–161; these read MSAT…ESNE and RGSV…KTAN. Residues 105 to 139 are compositionally biased toward low complexity; the sequence is PTPVATPKQASPSPTSDRSRSLSRSPSPSRSRSLS. 2 N-linked (GlcNAc...) asparagine glycosylation sites follow: Asn161 and Asn242. Helical transmembrane passes span 256–276, 310–330, 349–369, and 398–418; these read MPIF…APAV, VLME…LLRF, VCLG…GLAF, and LLIF…IHFK. 3 MIR domains span residues 450–511, 522–579, and 585–642; these read PLAV…VKRP, PDII…VEIL, and GDIW…VEEH. 3 helical membrane passes run 727-747, 791-811, and 835-855; these read ILLW…LAFY, LFLH…CFVV, and LMLI…IPFS.

This sequence belongs to the glycosyltransferase 39 family. As to quaternary structure, interacts with tw/POMT2. At the cellular blastoderm stage, expression accumulates in the ventrally located mesoderm primordium. At germ band extension, mesoderm expression is seen as stripes of strong expression. A very strong signal is also detected in the invaginating gut. As the germ band retracts, mesodermal expression decays and becomes restricted to somatic muscle precursors. After dorsal closure, expression has disappeared from the mesoderm and remains in the endoderm. Some expression is detected in a few cells of the head and the pharyngeal muscles.

It localises to the endoplasmic reticulum membrane. It catalyses the reaction a di-trans,poly-cis-dolichyl beta-D-mannosyl phosphate + L-seryl-[protein] = 3-O-(alpha-D-mannosyl)-L-seryl-[protein] + a di-trans,poly-cis-dolichyl phosphate + H(+). The enzyme catalyses a di-trans,poly-cis-dolichyl beta-D-mannosyl phosphate + L-threonyl-[protein] = 3-O-(alpha-D-mannosyl)-L-threonyl-[protein] + a di-trans,poly-cis-dolichyl phosphate + H(+). The protein operates within protein modification; protein glycosylation. Rt/POMT1 and tw/POMT2 function as a protein O-mannosyltransferase in association with each other to generate and maintain normal muscle development. This Drosophila melanogaster (Fruit fly) protein is Protein O-mannosyltransferase 1.